A 631-amino-acid chain; its full sequence is Sperm-associated antigen 16 protein (631 aa).

A coiled-coil region spans residues 152–267; the sequence is DVYTQIMLLE…LQETLKKLQR (116 aa). Residues 266-332 form a disordered region; it reads QRGHSYHGPQ…QPNPNLNVSK (67 aa). Composition is skewed to basic and acidic residues over residues 277 to 287 and 295 to 304; these read KVDHSREKENA and GLREAREQNK. WD repeat units lie at residues 350 to 389, 392 to 431, 434 to 473, 476 to 515, 518 to 557, 560 to 600, and 601 to 630; these read LHELPVSCVSMQPHKDILVSCGEDRLWKVLGLPKCNVLLT, GHTDWLSDCCFHPSGDKLATSSGDTTVKLWDLCKGDCILT, GHSRAVWSCTWHSCGNFVASSSLDKTSKIWDVNSERCRCT, GHTDSVNSIEFFPFSNTLLTSSADKTLSIWDARTGICEQS, GHMHSINDAIFDPRGHMIASCDACGVTKLWDFRKLLPIVS, IGPS…HKLM, and GHENEAHTVVFSHDGEILFSGGSDGTVRTW.

Interacts with SPAG6 and STK36. Phosphorylated by TSSK2. As to expression, isoform 1 is detected in testis. Isoform 4 is detected in testis and brain, and at lower levels in kidney, heart, pancreas, thyroid, ovary, adrenal gland, spinal cord, trachea and liver.

The protein resides in the cytoplasm. It localises to the cytoskeleton. The protein localises to the flagellum axoneme. It is found in the cilium axoneme. Its subcellular location is the cell projection. The protein resides in the cilium. It localises to the flagellum. Its function is as follows. Necessary for sperm flagellar function. Plays a role in motile ciliogenesis. May help to recruit STK36 to the cilium or apical surface of the cell to initiate subsequent steps of construction of the central pair apparatus of motile cilia. The protein is Sperm-associated antigen 16 protein (SPAG16) of Homo sapiens (Human).